The chain runs to 506 residues: Tabersonine 3-oxygenase (506 aa).

Over 1–5 the chain is Lumenal; it reads MEFHE. A helical transmembrane segment spans residues 6 to 26; that stretch reads SSPFVFITRGFIFIAISIAVL. The Cytoplasmic portion of the chain corresponds to 27 to 506; sequence RRIISKKTKT…DLQLIATSYA (480 aa). C450 lines the heme pocket.

The protein belongs to the cytochrome P450 family. Requires heme as cofactor. As to expression, expressed in leaf epidermis.

The protein localises to the endoplasmic reticulum membrane. The enzyme catalyses 16-methoxytabersonine + reduced [NADPH--hemoprotein reductase] + O2 = (3R)-1,2-didehydro-3-hydroxy-16-methoxy-2,3-dihydrotabersonine + oxidized [NADPH--hemoprotein reductase] + H2O + H(+). It carries out the reaction (-)-tabersonine + reduced [NADPH--hemoprotein reductase] + O2 = (3R)-1,2-didehydro-3-hydroxy-2,3-dihydrotabersonine + oxidized [NADPH--hemoprotein reductase] + H2O + H(+). The protein operates within alkaloid biosynthesis; vindoline biosynthesis. In terms of biological role, cytochrome P450 catalyzing the monooxygenation of 16-methoxytabersonine, 16-hydroxytabersonine and tabersonine, but not of 2,3-dihydrotabersonine. Converts the C2,C3 alkene of tabersonine and 16-methoxytabersonine to the epoxides, which then spontaneously open to form the corresponding imine alcohols. Inactive in converting amyrin to ursolic acid. The chain is Tabersonine 3-oxygenase from Catharanthus roseus (Madagascar periwinkle).